The chain runs to 29 residues: Toxin Bcg III 15.67 (29 aa).

The EGF-like domain maps to 2–29 (QGTACTGEHAHSFCLNGGTCRHIQQLGE). Cysteine 6 and cysteine 21 form a disulfide bridge.

Its subcellular location is the secreted. The protein localises to the nematocyst. In terms of biological role, has both toxic and EGF activity. This chain is Toxin Bcg III 15.67, found in Bunodosoma cangicum (Sea anemone).